The chain runs to 687 residues: Glycine--tRNA ligase beta subunit (687 aa).

This sequence belongs to the class-II aminoacyl-tRNA synthetase family. Tetramer of two alpha and two beta subunits.

Its subcellular location is the cytoplasm. The enzyme catalyses tRNA(Gly) + glycine + ATP = glycyl-tRNA(Gly) + AMP + diphosphate. This chain is Glycine--tRNA ligase beta subunit, found in Lactobacillus acidophilus (strain ATCC 700396 / NCK56 / N2 / NCFM).